We begin with the raw amino-acid sequence, 239 residues long: UDP-2,3-diacylglucosamine hydrolase (239 aa).

The Mn(2+) site is built by Asp8, His10, Asp41, Asn78, and His113. Substrate is bound at residue 78–79 (NR). 5 residues coordinate substrate: Asp121, Ser159, Asn163, Lys166, and His194. 2 residues coordinate Mn(2+): His194 and His196.

The protein belongs to the LpxH family. Mn(2+) is required as a cofactor.

It is found in the cell inner membrane. It catalyses the reaction UDP-2-N,3-O-bis[(3R)-3-hydroxytetradecanoyl]-alpha-D-glucosamine + H2O = 2-N,3-O-bis[(3R)-3-hydroxytetradecanoyl]-alpha-D-glucosaminyl 1-phosphate + UMP + 2 H(+). It participates in glycolipid biosynthesis; lipid IV(A) biosynthesis; lipid IV(A) from (3R)-3-hydroxytetradecanoyl-[acyl-carrier-protein] and UDP-N-acetyl-alpha-D-glucosamine: step 4/6. Hydrolyzes the pyrophosphate bond of UDP-2,3-diacylglucosamine to yield 2,3-diacylglucosamine 1-phosphate (lipid X) and UMP by catalyzing the attack of water at the alpha-P atom. Involved in the biosynthesis of lipid A, a phosphorylated glycolipid that anchors the lipopolysaccharide to the outer membrane of the cell. In Shewanella oneidensis (strain ATCC 700550 / JCM 31522 / CIP 106686 / LMG 19005 / NCIMB 14063 / MR-1), this protein is UDP-2,3-diacylglucosamine hydrolase.